The sequence spans 610 residues: Anthocyanin regulatory Lc protein (610 aa).

Disordered regions lie at residues 402–422 and 468–524; these read ATGA…MSER and LESS…PVLT. The bHLH domain maps to 412–461; that stretch reads TGTKNHVMSERKRREKLNEMFLVLKSLLPSIHRVNKASILAETIAYLKEL. Residues 481-495 show a composition bias toward polar residues; that stretch reads TTTRLITRPSRGNNE. Basic and acidic residues predominate over residues 508–519; the sequence is KSPELGRDDVER.

This sequence belongs to the bHLH protein family. In terms of assembly, efficient DNA binding requires dimerization with another bHLH protein.

The protein localises to the nucleus. In terms of biological role, putative transcriptional activator. Controls tissue-specific synthesis of anthocyanin pigments in various parts of the maize plant. This chain is Anthocyanin regulatory Lc protein (LC), found in Zea mays (Maize).